Reading from the N-terminus, the 257-residue chain is Low affinity immunoglobulin gamma Fc region receptor III-A (257 aa).

The N-terminal stretch at 1 to 19 is a signal peptide; that stretch reads MWQLLSPTALLLLVSVPGT. Over 20 to 209 the chain is Extracellular; it reads HAEDPPKSVV…ILSFFLPWHQ (190 aa). Ig-like C2-type domains are found at residues 25-104 and 108-190; these read PKSV…LRLE and GWLL…VKVT. Cystine bridges form between cysteine 48–cysteine 90 and cysteine 129–cysteine 173. N-linked (GlcNAc...) asparagine glycans are attached at residues asparagine 64, asparagine 134, and asparagine 162. The N-linked (GlcNAc...) asparagine; in variant N-181 glycan is linked to aspartate 181. A helical membrane pass occupies residues 210–230; the sequence is IIFCLVMGFLFAVDTGLYFSV. The Cytoplasmic segment spans residues 231 to 257; it reads RKVLRSSKEDWRNGKVTWSRDPADKGG.

As to quaternary structure, forms a heterooligomeric complex with ITAM-containing signaling subunits FCER1G. Interacts (via transmembrane domain) with signaling subunits; this interaction is a prerequisite for receptor complex expression on the cell surface and intracellular signal transduction. Binds the Fc region of antigen-complexed IgG. As to expression, expressed in polymorphonuclear leukocytes, pulmonary alveolar macrophages and peripheral blood mononuclear cells (at protein level). Found in spleen, and at very low levels in lymph nodes but not in thymus or liver.

It is found in the cell membrane. Functionally, receptor for the invariable Fc fragment of immunoglobulin gamma (IgG). Optimally activated upon binding of clustered antigen-IgG complexes displayed on cell surfaces, triggers lysis of antibody-coated cells, a process known as antibody-dependent cellular cytotoxicity (ADCC). Does not bind free monomeric IgG, thus avoiding inappropriate effector cell activation in the absence of antigenic trigger. Mediates IgG effector functions on natural killer (NK) cells. Binds antigen-IgG complexes generated upon infection and triggers NK cell-dependent cytokine production and degranulation to limit viral load and propagation. Fc-binding subunit that associates with FCER1G adapter to form functional signaling complexes. Following the engagement of antigen-IgG complexes, triggers phosphorylation of immunoreceptor tyrosine-based activation motif (ITAM)-containing adapter with subsequent activation of phosphatidylinositol 3-kinase signaling and sustained elevation of intracellular calcium that ultimately drive NK cell activation. Mediates enhanced ADCC in response to afucosylated IgGs. The sequence is that of Low affinity immunoglobulin gamma Fc region receptor III-A from Sus scrofa (Pig).